The following is a 905-amino-acid chain: Protein translocase subunit SecA (905 aa).

Residues Gln89, 107-111 (GEGKT), and Asp502 contribute to the ATP site. The tract at residues 837 to 885 (EQTDVGDPILNDQNKKNSSTLWTPSQENKFVNPKDRNPSDSTTWGKVGR) is disordered. Over residues 852–865 (KNSSTLWTPSQENK) the composition is skewed to polar residues. Residues Cys889, Cys891, Cys900, and His901 each coordinate Zn(2+).

The protein belongs to the SecA family. As to quaternary structure, monomer and homodimer. Part of the essential Sec protein translocation apparatus which comprises SecA, SecYEG and auxiliary proteins SecDF-YajC and YidC. It depends on Zn(2+) as a cofactor.

The protein localises to the cell inner membrane. It is found in the cytoplasm. The catalysed reaction is ATP + H2O + cellular proteinSide 1 = ADP + phosphate + cellular proteinSide 2.. Part of the Sec protein translocase complex. Interacts with the SecYEG preprotein conducting channel. Has a central role in coupling the hydrolysis of ATP to the transfer of proteins into and across the cell membrane, serving both as a receptor for the preprotein-SecB complex and as an ATP-driven molecular motor driving the stepwise translocation of polypeptide chains across the membrane. The chain is Protein translocase subunit SecA from Bartonella henselae (strain ATCC 49882 / DSM 28221 / CCUG 30454 / Houston 1) (Rochalimaea henselae).